A 79-amino-acid polypeptide reads, in one-letter code: Putative defensin-like protein 309 (79 aa).

An N-terminal signal peptide occupies residues 1–19; the sequence is MKILAFFIFVLLIFSCSSS. 3 disulfide bridges follow: cysteine 31/cysteine 50, cysteine 37/cysteine 55, and cysteine 41/cysteine 57.

The protein belongs to the DEFL family.

Its subcellular location is the secreted. This is Putative defensin-like protein 309 from Arabidopsis thaliana (Mouse-ear cress).